Reading from the N-terminus, the 839-residue chain is Probable beta-glucosidase I (839 aa).

N-linked (GlcNAc...) asparagine glycosylation occurs at N197. The active site involves D225. In terms of domain architecture, PA14 spans 395-555 (DGKKGFSFRV…SQEELIAKAA (161 aa)).

Belongs to the glycosyl hydrolase 3 family.

It is found in the secreted. The enzyme catalyses Hydrolysis of terminal, non-reducing beta-D-glucosyl residues with release of beta-D-glucose.. The protein operates within glycan metabolism; cellulose degradation. Its function is as follows. Beta-glucosidases are one of a number of cellulolytic enzymes involved in the degradation of cellulosic biomass. Catalyzes the last step releasing glucose from the inhibitory cellobiose. The chain is Probable beta-glucosidase I (bglI) from Aspergillus terreus (strain NIH 2624 / FGSC A1156).